A 467-amino-acid chain; its full sequence is MNKGKIKQIIGSVLDIEFENGELPEIYNALEIETNVSGKKETIIAEVQTHIGGKAVRAIALSSTDGLIRGQEVSNTGKPISVPVGDATLGRIFNVLGKTIDEGPAITVKETRPIHRAAPSFDELTSKTEVFETGIKVIDLLAPYIKGGKTGLFGGAGVGKTVLIQELINNIAKQHGGFSVFAGVGERTREGNDLWREMKESGVIDKTVLCYGQMNEPPGARLRVALSALTMAEHFRDSIGTDVLLFVDNIFRFSQAGSEVSALLGRMPSAVGYQPTLSTEMGALQERITSTKKGSITSVQAIYVPADDLTDPAPANAFAHLDATTVLSRAISDKGIYPAVDPLDSTSRVMNAQVLGEEHYLVAREVQRILQRYKDLQDIIAILGMDELSEDDKVLVARARKIEKFLSQPFHVAEVFTGAPGKYVKLADTVRSFKEVISGNYDHLPEQAFYMVGSIDDAIEKAKGYKG.

Residue 154–161 coordinates ATP; the sequence is GGAGVGKT.

It belongs to the ATPase alpha/beta chains family. F-type ATPases have 2 components, CF(1) - the catalytic core - and CF(0) - the membrane proton channel. CF(1) has five subunits: alpha(3), beta(3), gamma(1), delta(1), epsilon(1). CF(0) has three main subunits: a(1), b(2) and c(9-12). The alpha and beta chains form an alternating ring which encloses part of the gamma chain. CF(1) is attached to CF(0) by a central stalk formed by the gamma and epsilon chains, while a peripheral stalk is formed by the delta and b chains.

Its subcellular location is the cell inner membrane. The enzyme catalyses ATP + H2O + 4 H(+)(in) = ADP + phosphate + 5 H(+)(out). Its function is as follows. Produces ATP from ADP in the presence of a proton gradient across the membrane. The catalytic sites are hosted primarily by the beta subunits. The sequence is that of ATP synthase subunit beta from Leptospira interrogans serogroup Icterohaemorrhagiae serovar copenhageni (strain Fiocruz L1-130).